The chain runs to 245 residues: NAD-dependent protein deacylase (245 aa).

Residues Met1–His237 enclose the Deacetylase sirtuin-type domain. Position 13–32 (Gly13–Trp32) interacts with NAD(+). Substrate-binding residues include Tyr57 and Arg60. Gln94–Asp97 contacts NAD(+). The Proton acceptor role is filled by His112. 2 residues coordinate Zn(2+): Cys120 and Cys139. Residues Gly179–Ser181, Asn205–Glu207, and Ala223 each bind NAD(+).

It belongs to the sirtuin family. Class III subfamily. Zn(2+) serves as cofactor.

The protein localises to the cytoplasm. The enzyme catalyses N(6)-acetyl-L-lysyl-[protein] + NAD(+) + H2O = 2''-O-acetyl-ADP-D-ribose + nicotinamide + L-lysyl-[protein]. It catalyses the reaction N(6)-succinyl-L-lysyl-[protein] + NAD(+) + H2O = 2''-O-succinyl-ADP-D-ribose + nicotinamide + L-lysyl-[protein]. Functionally, NAD-dependent lysine deacetylase and desuccinylase that specifically removes acetyl and succinyl groups on target proteins. Modulates the activities of several proteins which are inactive in their acylated form. In Vibrio vulnificus (strain CMCP6), this protein is NAD-dependent protein deacylase.